Reading from the N-terminus, the 429-residue chain is Ribosomal RNA small subunit methyltransferase B (429 aa).

S-adenosyl-L-methionine is bound by residues 254–260 (CAAPGGK), Asp277, Asp303, and Asp322. Cys375 (nucleophile) is an active-site residue.

This sequence belongs to the class I-like SAM-binding methyltransferase superfamily. RsmB/NOP family.

The protein resides in the cytoplasm. It carries out the reaction cytidine(967) in 16S rRNA + S-adenosyl-L-methionine = 5-methylcytidine(967) in 16S rRNA + S-adenosyl-L-homocysteine + H(+). Functionally, specifically methylates the cytosine at position 967 (m5C967) of 16S rRNA. The protein is Ribosomal RNA small subunit methyltransferase B of Cronobacter sakazakii (strain ATCC BAA-894) (Enterobacter sakazakii).